We begin with the raw amino-acid sequence, 242 residues long: Type III pantothenate kinase (242 aa).

An ATP-binding site is contributed by Asp6 to Lys13. Substrate-binding positions include Tyr90 and Gly97–Arg100. The active-site Proton acceptor is Asp99. Position 119 (Asp119) interacts with K(+). Residue Ser122 participates in ATP binding. Residue Thr174 coordinates substrate.

This sequence belongs to the type III pantothenate kinase family. As to quaternary structure, homodimer. NH4(+) is required as a cofactor. The cofactor is K(+).

The protein localises to the cytoplasm. The enzyme catalyses (R)-pantothenate + ATP = (R)-4'-phosphopantothenate + ADP + H(+). The protein operates within cofactor biosynthesis; coenzyme A biosynthesis; CoA from (R)-pantothenate: step 1/5. Catalyzes the phosphorylation of pantothenate (Pan), the first step in CoA biosynthesis. This chain is Type III pantothenate kinase, found in Marinobacter nauticus (strain ATCC 700491 / DSM 11845 / VT8) (Marinobacter aquaeolei).